The following is a 411-amino-acid chain: Proteasome-activating nucleotidase 2 (411 aa).

The stretch at 35-75 (IVAVNGELQAQLDDVEARREELREEVNRLQRENETLKTASL) forms a coiled coil. Residues 196 to 201 (GTGKTM) and His-335 contribute to the ATP site. The tract at residues 408 to 411 (SYIQ) is docks into pockets in the proteasome alpha-ring to cause gate opening.

Belongs to the AAA ATPase family. Homohexamer. The hexameric complex has a two-ring architecture resembling a top hat that caps the 20S proteasome core at one or both ends. Upon ATP-binding, the C-terminus of PAN interacts with the alpha-rings of the proteasome core by binding to the intersubunit pockets.

Its subcellular location is the cytoplasm. Its function is as follows. ATPase which is responsible for recognizing, binding, unfolding and translocation of substrate proteins into the archaeal 20S proteasome core particle. Is essential for opening the gate of the 20S proteasome via an interaction with its C-terminus, thereby allowing substrate entry and access to the site of proteolysis. Thus, the C-termini of the proteasomal ATPase function like a 'key in a lock' to induce gate opening and therefore regulate proteolysis. Unfolding activity requires energy from ATP hydrolysis, whereas ATP binding alone promotes ATPase-20S proteasome association which triggers gate opening, and supports translocation of unfolded substrates. This Halobacterium salinarum (strain ATCC 700922 / JCM 11081 / NRC-1) (Halobacterium halobium) protein is Proteasome-activating nucleotidase 2.